A 163-amino-acid chain; its full sequence is Nucleotide-binding protein HD_0358 (163 aa).

It belongs to the YajQ family.

In terms of biological role, nucleotide-binding protein. This Haemophilus ducreyi (strain 35000HP / ATCC 700724) protein is Nucleotide-binding protein HD_0358.